Consider the following 1229-residue polypeptide: MKVRKMHYPLFSFTEYLSCYIILYFFVFLPNYSYAININNYHNKNNLWNINNKWNNQQSNHFSNNRIGHFLWGSKIRKNPLASISTSITTKKLENQKKKTNKNESYSNVNDKYEHNNNTAHFVQINYKNDQSNDTLSTYKNNNEMTVEGKPNNLASGEGKKEIHNTTQKILEKVDYFKEREKITNSYNNNNNNNKVIVTHDNKNHTNYINKVENKQSDDKIKNLNNKYIKKFKSHILQNDILGTISTMFWSGKKNNNGNVKKGIKNVPMDEKSYSPNDHDNNSNNSNNNNNNDNNNSNNNNNNNNGGKNNSYYNEKTQKGVNDKETNFLLKALDSGKFPTYCLVENIDENLDNFDIYMSKEKMDELNINDGATVLLKGKKKREMLGIARLDRSLKKHYVVISFAMKKNLRLMHNDIIKIHPFMNAKRIRNVVLSPFSDTIPNLSREELEKAVIHPYLKNSYKPLRVNSNIYIYYKNNKIEFKVLKIISEESENEEFGCIGEHSQLTLAEEYLKREDYEENNDDITYEDLGGMKKQLNKIRELIELPLKYPEIFMSIGISAPKGVLMHGIPGTGKTSIAKAIANESNAYCYIINGPEIMSKHIGESEQKLRKIFKKASEKTPCIIFIDEIDSIANKRSKSNNELEKRVVSQLLTLMDGLKKNNNVLVLAATNRPNSIDPALRRFGRFDREIEIPVPDEQGRYEILLTKTKKMKLDPDVNLRKIAKECHGYVGADLAQLCFEAAIQCIKEHIHFLDLDEEDFIEFMKISVDEDKKNMGNEPYGSSHTNNSNYINHLTESSNKLSYTNMFPLNRKNTLLQNDKNEMNKDSSYDKKTDALDNYKNDSTIDMEKKKNKKKSNFFFSNDDEETKNKNKTNVNQKKKKNPNDKLDKNERRIPAYILNKLTIKAKHFQHALNICNPSSLRERQVQIPTVTWNDIGGMNEVKEQLKETILYPLEYKHLYNKFNSNYNKGILLYGPPGCGKTLLAKAIANECKANFISVKGPELLTMWFGESEANVRDLFDKARAASPCIIFFDEIDSLAKERNSNTNNDASDRVINQILTEIDGINEKKTIFIIAATNRPDILDKALTRPGRLDKLIYISLPDLKSRYSIFKAILKNTPLNEDVDIHDMAKRTEGFSGADITNLCQSAVNEAIKETIHLLNIRKKEQEEQRKKNKNSFKIDDTDTYDPVPTLSKKHFDLAFKNARISIQPEDVLKYEKFKEKLSLQDF.

Low complexity predominate over residues 252–267; it reads GKKNNNGNVKKGIKNV. The tract at residues 252–315 is disordered; the sequence is GKKNNNGNVK…GGKNNSYYNE (64 aa). The span at 268–281 shows a compositional bias: basic and acidic residues; sequence PMDEKSYSPNDHDN. Residues 282–314 show a composition bias toward low complexity; it reads NSNNSNNNNNNDNNNSNNNNNNNNGGKNNSYYN. Position 568-575 (568-575) interacts with ATP; it reads GIPGTGKT. 2 disordered regions span residues 814–837 and 860–892; these read TLLQNDKNEMNKDSSYDKKTDALD and FSNDDEETKNKNKTNVNQKKKKNPNDKLDKNER. Composition is skewed to basic and acidic residues over residues 819 to 837 and 882 to 892; these read DKNEMNKDSSYDKKTDALD and NPNDKLDKNER. 975-982 contacts ATP; it reads GPPGCGKT.

The protein belongs to the AAA ATPase family.

The chain is Putative cell division cycle ATPase from Plasmodium falciparum (isolate 3D7).